We begin with the raw amino-acid sequence, 420 residues long: Multifunctional CCA protein (420 aa).

Residues G8 and R11 each coordinate ATP. 2 residues coordinate CTP: G8 and R11. 2 residues coordinate Mg(2+): D21 and D23. The ATP site is built by R91, R137, and R140. R91, R137, and R140 together coordinate CTP. An HD domain is found at 228 to 334; the sequence is TFVHTMLVLQ…LKLFNRLDVW (107 aa).

Belongs to the tRNA nucleotidyltransferase/poly(A) polymerase family. Bacterial CCA-adding enzyme type 1 subfamily. As to quaternary structure, monomer. Can also form homodimers and oligomers. It depends on Mg(2+) as a cofactor. Ni(2+) serves as cofactor.

It catalyses the reaction a tRNA precursor + 2 CTP + ATP = a tRNA with a 3' CCA end + 3 diphosphate. It carries out the reaction a tRNA with a 3' CCA end + 2 CTP + ATP = a tRNA with a 3' CCACCA end + 3 diphosphate. Functionally, catalyzes the addition and repair of the essential 3'-terminal CCA sequence in tRNAs without using a nucleic acid template. Adds these three nucleotides in the order of C, C, and A to the tRNA nucleotide-73, using CTP and ATP as substrates and producing inorganic pyrophosphate. tRNA 3'-terminal CCA addition is required both for tRNA processing and repair. Also involved in tRNA surveillance by mediating tandem CCA addition to generate a CCACCA at the 3' terminus of unstable tRNAs. While stable tRNAs receive only 3'-terminal CCA, unstable tRNAs are marked with CCACCA and rapidly degraded. The protein is Multifunctional CCA protein of Pasteurella multocida (strain Pm70).